The sequence spans 421 residues: Serine hydroxymethyltransferase (421 aa).

Residues Leu121 and 125 to 127 contribute to the (6S)-5,6,7,8-tetrahydrofolate site; that span reads GHL. Position 230 is an N6-(pyridoxal phosphate)lysine (Lys230). Position 355-357 (355-357) interacts with (6S)-5,6,7,8-tetrahydrofolate; it reads SPF.

It belongs to the SHMT family. As to quaternary structure, homodimer. Pyridoxal 5'-phosphate is required as a cofactor.

Its subcellular location is the cytoplasm. It catalyses the reaction (6R)-5,10-methylene-5,6,7,8-tetrahydrofolate + glycine + H2O = (6S)-5,6,7,8-tetrahydrofolate + L-serine. It participates in one-carbon metabolism; tetrahydrofolate interconversion. It functions in the pathway amino-acid biosynthesis; glycine biosynthesis; glycine from L-serine: step 1/1. Functionally, catalyzes the reversible interconversion of serine and glycine with tetrahydrofolate (THF) serving as the one-carbon carrier. This reaction serves as the major source of one-carbon groups required for the biosynthesis of purines, thymidylate, methionine, and other important biomolecules. Also exhibits THF-independent aldolase activity toward beta-hydroxyamino acids, producing glycine and aldehydes, via a retro-aldol mechanism. This Cellvibrio japonicus (strain Ueda107) (Pseudomonas fluorescens subsp. cellulosa) protein is Serine hydroxymethyltransferase.